A 631-amino-acid polypeptide reads, in one-letter code: Tumor protein p73 (631 aa).

The interval 1-43 (MAQTSSSSSSTFEHLWSSLEPDSTYFDLPQPSQGTSEASGSEE) is transactivation. Disordered stretches follow at residues 23 to 43 (STYF…GSEE) and 69 to 113 (SRAA…NTDY). At T24 the chain carries Phosphothreonine; by PLK1. The residue at position 25 (Y25) is a Phosphotyrosine; by SRC and HCK. Composition is skewed to polar residues over residues 30–43 (QPSQ…GSEE) and 86–100 (PTHS…TFDT). Phosphotyrosine; by ABL1 is present on Y91. The segment at 123 to 302 (FQQSSTAKSA…DRKADEDHYR (180 aa)) is DNA-binding. 4 residues coordinate Zn(2+): C186, H189, C250, and C254. Over residues 306 to 315 (ALNESTTKNG) the composition is skewed to polar residues. Residues 306-334 (ALNESTTKNGAASKRAFKQSPPAIPALGT) form a disordered region. Residues 337–372 (KKRRHGDEDMFYMHVRGRENFEILMKVKESLELMEL) form an interaction with HIPK2 region. Positions 337-378 (KKRRHGDEDMFYMHVRGRENFEILMKVKESLELMELVPQPLV) are oligomerization. A PPxY motif motif is present at residues 477–481 (PPPPY). The SAM domain maps to 479–545 (PPYHADPSLV…WRGLQDLKQS (67 aa)). K622 is covalently cross-linked (Glycyl lysine isopeptide (Lys-Gly) (interchain with G-Cter in SUMO); alternate). A Glycyl lysine isopeptide (Lys-Gly) (interchain with G-Cter in SUMO2); alternate cross-link involves residue K622.

Belongs to the p53 family. In terms of assembly, found in a complex with p53/TP53 and CABLES1. The C-terminal oligomerization domain binds to the ABL1 tyrosine kinase SH3 domain. Interacts with HECW2, HIPK2, RANBP9 and WWOX. Interacts (via SAM domain) with FBXO45 (via B30.2/SPRY domain). Interacts with YAP1 (phosphorylated form). Interacts with HCK (via SH3 domain); this inhibits TP73 activity and degradation. Interacts (via SAM domain) with NQO1; this interaction is NADH-dependent, stabilizes TP73 in response to oxidative stress and protects it from ubiquitin-independent degradation by the 20S proteasome. Zn(2+) is required as a cofactor. In terms of processing, sumoylated on Lys-622, which potentiates proteasomal degradation but does not affect transcriptional activity. Post-translationally, phosphorylation by PLK1 and PLK3 inhibits the transcription regulator activity and pro-apoptotic function. Higher levels of phosphorylation seen in striatal neurons of. mutant huntingtin (htt) transgenic mice. Polyubiquitinated by RCHY1/PIRH2; leading to its degradation by the proteasome. As to expression, found in striatal neurons of mutant huntingtin (htt) transgenic mice (at protein level). Isoform 1 is expressed in the nasal epithelium, the vomeronasal organ, the hippocampus and the hypothalamus.

Its subcellular location is the nucleus. The protein resides in the cytoplasm. Its function is as follows. Participates in the apoptotic response to DNA damage. Isoforms containing the transactivation domain are pro-apoptotic, isoforms lacking the domain are anti-apoptotic and block the function of p53 and transactivating p73 isoforms. May be a tumor suppressor protein. Is an activator of FOXJ1 expression, essential for the positive regulation of lung ciliated cell differentiation. The polypeptide is Tumor protein p73 (Tp73) (Mus musculus (Mouse)).